Consider the following 521-residue polypeptide: 4-cresol dehydrogenase [hydroxylating] flavoprotein subunit (521 aa).

Residues 54-268 form the FAD-binding PCMH-type domain; sequence AAHAPSAAVT…VEIVDALRPL (215 aa). Position 384 is an O-8alpha-FAD tyrosine (Y384).

In terms of assembly, tetramer of two cytochrome subunits and two flavoprotein subunits. It depends on FAD as a cofactor.

It catalyses the reaction 4-methylphenol + 4 oxidized [azurin] + H2O = 4 reduced [azurin] + 4-hydroxybenzaldehyde + 4 H(+). It functions in the pathway aromatic compound metabolism; p-cresol degradation. Its function is as follows. Catalyzes the azurin dependent hydroxylation of the methyl group of 4-methylphenol to form 4-hydroxybenzaldehyde. This Pseudomonas putida (Arthrobacter siderocapsulatus) protein is 4-cresol dehydrogenase [hydroxylating] flavoprotein subunit (pchF).